A 215-amino-acid polypeptide reads, in one-letter code: Large ribosomal subunit protein bL25 (215 aa).

The disordered stretch occupies residues 190–215; sequence VLTDAEEETDETPEEPEAIRQKGDEE. The segment covering 193–205 has biased composition (acidic residues); it reads DAEEETDETPEEP. The segment covering 206–215 has biased composition (basic and acidic residues); sequence EAIRQKGDEE.

The protein belongs to the bacterial ribosomal protein bL25 family. CTC subfamily. As to quaternary structure, part of the 50S ribosomal subunit; part of the 5S rRNA/L5/L18/L25 subcomplex. Contacts the 5S rRNA. Binds to the 5S rRNA independently of L5 and L18.

Its function is as follows. This is one of the proteins that binds to the 5S RNA in the ribosome where it forms part of the central protuberance. This chain is Large ribosomal subunit protein bL25, found in Maricaulis maris (strain MCS10) (Caulobacter maris).